Reading from the N-terminus, the 345-residue chain is Diacylglycerol O-acyltransferase 1 (345 aa).

The Cytoplasmic portion of the chain corresponds to 1–49 (MSEETSIPGIIASTPPISKDSRRNVSHWLQALAVFLHSVSLTLTASWYT). Residues 50–70 (VLWAFLPFWPFLIVYLIWLIY) form a helical membrane-spanning segment. At 71–113 (DDGFVTGKDRQKRWLRNAPPYRWFCHYFPIRLHKTTELDSEKN) the chain is on the lumenal side. Residues 114-134 (YIFGYHPHGIISLGAFGGFAS) traverse the membrane as a helical segment. Residues 135-141 (EGADFSK) lie on the Cytoplasmic side of the membrane. Residues 142 to 162 (LFPGINVSVLTLNSNFYVPVY) form a helical membrane-spanning segment. Residues 163–216 (RDYLMALNINSVSKKSCVSILSRKPGDSVLIVIGGAQESLLSRPGQNNLVLKKR) lie on the Lumenal side of the membrane. Residues 217-237 (FGFVKLAFLTGSSLVPCFAFG) traverse the membrane as a helical segment. Residues 238–345 (ESDIFEQVDN…NRISELKLSA (108 aa)) are Cytoplasmic-facing.

Belongs to the diacylglycerol acyltransferase family.

It is found in the lipid droplet. Its subcellular location is the endoplasmic reticulum membrane. It carries out the reaction an acyl-CoA + a 1,2-diacyl-sn-glycerol = a triacyl-sn-glycerol + CoA. It catalyses the reaction a 2-acylglycerol + an acyl-CoA = a 1,2-diacyl-sn-glycerol + CoA. It participates in glycerolipid metabolism; triacylglycerol biosynthesis. In terms of biological role, catalyzes the terminal and only committed step in triacylglycerol (TAG) synthesis by using diacylglycerol (DAG) and fatty acyl-CoA as substrates. Required for storage lipid synthesis. Major DAG esterifying enzyme in stationary phase when TAG production is particularly active. Involved in lipid particle synthesis from the endoplasmic reticulum, promoting localized TAG production at discrete ER subdomains. This chain is Diacylglycerol O-acyltransferase 1 (dga1), found in Schizosaccharomyces pombe (strain 972 / ATCC 24843) (Fission yeast).